The primary structure comprises 297 residues: tRNA (guanine-N(7)-)-methyltransferase (297 aa).

S-adenosyl-L-methionine is bound by residues E22, E47, D74, and D97. The active site involves D97. Residues K101, D133, and T165 to E168 contribute to the substrate site.

Belongs to the class I-like SAM-binding methyltransferase superfamily. TrmB family.

It carries out the reaction guanosine(46) in tRNA + S-adenosyl-L-methionine = N(7)-methylguanosine(46) in tRNA + S-adenosyl-L-homocysteine. Its pathway is tRNA modification; N(7)-methylguanine-tRNA biosynthesis. Its function is as follows. Catalyzes the formation of N(7)-methylguanine at position 46 (m7G46) in tRNA. The sequence is that of tRNA (guanine-N(7)-)-methyltransferase from Aquifex aeolicus (strain VF5).